The sequence spans 127 residues: Odontogenesis-associated phosphoprotein (127 aa).

The first 23 residues, 1 to 23 (MAPGFHFSWLLVSWLVVTTVKGQ), serve as a signal peptide directing secretion.

In terms of tissue distribution, expressed in enamel organs and not expressed in the heart, kidney, or spleen.

Its subcellular location is the secreted. In terms of biological role, may promote nucleation of hydroxyapatite. This is Odontogenesis-associated phosphoprotein from Rattus norvegicus (Rat).